The following is a 760-amino-acid chain: MLLHFDIVIQLLSSHTLKSHQVEPPMDFETSFEEFVEDKRFIALEVSDNDDDCDTDLTADTADELESSAILKMRESDASLNVTTGNNTSRKTTSNSKKRWSLLSNHSAVSSSKSKKRWSVLSSSFTSESHKDRESRNVLQQKRKSLQSYSSLDTVASNSSISASSSLKRSSTGLSLRQLFTKIGINDDISQPGIGIPQGKENLPPTMGKKNSSIASTSSENRLRTPLKPLVNHSKRPTSQPQQQQPLYNASLSSRRSSISSTVSSSSSSKWRFWKRNKNQTPALLQPDHHSLKTFPAVNRRDSMTPVEPRNMVKHKTSFSDFHKTIFSSNTYSESSDTISSMEITLKNKASSSSLSLNVLKKRNSQSSLKHKSSHASLQKFKRNKGKSSMIAPSTATNSSNDDSCSYSSKNSTLSHRISLPVPDQVSRDKIQNKLRYSTSLLSLNSKSSLPMNKNDHDETLLRQILLNCDIKRILNPAKGDVLPLINDVNHLSSIQLTSNVWQIGEVICKKVSLGTIDDITWDRKFLSLQELEKLKIMQQKFDGIPQLLKSFVVKEANGGLYLYLLFKDHGTPISLISLKNWKQILKIFWSCAGIIHGLEKNLKFEHRNLTLDNILIDGNGNITIIDFKCSRLQTPQDDVLYLRLDHPLFFLNGKDKSKINEYQYQFEFEIYQSMRILLNMDASAFEPMTNLYWLYYLSRVLLKFGDRKLGKNDANRDKMARVINHLEMNLAVHKRGGQLFKRLETEDIKNTGDLLKLYK.

2 positions are modified to phosphoserine: S76 and S79. Disordered regions lie at residues 76–100 (SDAS…KKRW), 123–153 (SSFT…SSLD), 187–264 (DDIS…STVS), and 362–408 (KRNS…CSYS). Residues 78–95 (ASLNVTTGNNTSRKTTSN) are compositionally biased toward polar residues. A KEN box motif is present at residues 200 to 202 (KEN). Residues 209–220 (KKNSSIASTSSE) show a composition bias toward polar residues. The D box signature appears at 224–232 (RTPLKPLVN). The span at 237-250 (PTSQPQQQQPLYNA) shows a compositional bias: polar residues. The span at 251-264 (SLSSRRSSISSTVS) shows a compositional bias: low complexity. Basic residues predominate over residues 362–386 (KRNSQSSLKHKSSHASLQKFKRNKG). Residues 398–408 (NSSNDDSCSYS) show a composition bias toward low complexity. A Protein kinase domain is found at 468 to 760 (NCDIKRILNP…NTGDLLKLYK (293 aa)). Residues 474-482 (ILNPAKGDV) and K510 each bind ATP.

The protein belongs to the protein kinase superfamily. Ser/Thr protein kinase family. Haspin subfamily. In terms of processing, periodically phosphorylated during the cell cycle with a phosphorylation peak during mitosis and hyperphosphorylated after DNA damage.

It carries out the reaction L-seryl-[protein] + ATP = O-phospho-L-seryl-[protein] + ADP + H(+). It catalyses the reaction L-threonyl-[protein] + ATP = O-phospho-L-threonyl-[protein] + ADP + H(+). Functionally, serine/threonine haspin-like protein kinase involved in cell cycle regulation. This Saccharomyces cerevisiae (strain ATCC 204508 / S288c) (Baker's yeast) protein is Serine/threonine-protein kinase Haspin homolog ALK1 (ALK1).